The primary structure comprises 137 residues: Nucleoside diphosphate kinase (137 aa).

ATP is bound by residues Lys9, Phe57, Arg85, Thr91, Arg102, and Asn112. Catalysis depends on His115, which acts as the Pros-phosphohistidine intermediate.

Belongs to the NDK family. Homotetramer. Requires Mg(2+) as cofactor.

It is found in the cytoplasm. The enzyme catalyses a 2'-deoxyribonucleoside 5'-diphosphate + ATP = a 2'-deoxyribonucleoside 5'-triphosphate + ADP. The catalysed reaction is a ribonucleoside 5'-diphosphate + ATP = a ribonucleoside 5'-triphosphate + ADP. Major role in the synthesis of nucleoside triphosphates other than ATP. The ATP gamma phosphate is transferred to the NDP beta phosphate via a ping-pong mechanism, using a phosphorylated active-site intermediate. The sequence is that of Nucleoside diphosphate kinase from Leptospira biflexa serovar Patoc (strain Patoc 1 / ATCC 23582 / Paris).